A 153-amino-acid chain; its full sequence is Small ribosomal subunit protein bS16 (153 aa).

Belongs to the bacterial ribosomal protein bS16 family.

This chain is Small ribosomal subunit protein bS16, found in Leifsonia xyli subsp. xyli (strain CTCB07).